Reading from the N-terminus, the 248-residue chain is Triosephosphate isomerase (248 aa).

9–11 (NWK) contributes to the substrate binding site. H94 acts as the Electrophile in catalysis. The Proton acceptor role is filled by E166. Substrate-binding positions include G172, S212, and 233 to 234 (GG).

Belongs to the triosephosphate isomerase family. In terms of assembly, homodimer.

The protein localises to the cytoplasm. The enzyme catalyses D-glyceraldehyde 3-phosphate = dihydroxyacetone phosphate. It participates in carbohydrate biosynthesis; gluconeogenesis. It functions in the pathway carbohydrate degradation; glycolysis; D-glyceraldehyde 3-phosphate from glycerone phosphate: step 1/1. Functionally, involved in the gluconeogenesis. Catalyzes stereospecifically the conversion of dihydroxyacetone phosphate (DHAP) to D-glyceraldehyde-3-phosphate (G3P). The chain is Triosephosphate isomerase from Clostridium botulinum (strain Loch Maree / Type A3).